Consider the following 133-residue polypeptide: Small ribosomal subunit protein uS19 (133 aa).

The protein belongs to the universal ribosomal protein uS19 family.

Its function is as follows. Protein S19 forms a complex with S13 that binds strongly to the 16S ribosomal RNA. In Archaeoglobus fulgidus (strain ATCC 49558 / DSM 4304 / JCM 9628 / NBRC 100126 / VC-16), this protein is Small ribosomal subunit protein uS19 (rps19).